A 96-amino-acid chain; its full sequence is UPF0235 protein YggU (96 aa).

The protein belongs to the UPF0235 family.

The chain is UPF0235 protein YggU from Salmonella typhi.